The sequence spans 295 residues: Small ribosomal subunit biogenesis GTPase RsgA (295 aa).

In terms of domain architecture, CP-type G spans 65–223 (KNQLVRPPVA…VLDTPGFTAL (159 aa)). GTP-binding positions include 114-117 (NKVD) and 165-173 (GPSGVGKSS). Residues Cys246, Cys251, His253, and Cys259 each coordinate Zn(2+).

The protein belongs to the TRAFAC class YlqF/YawG GTPase family. RsgA subfamily. Monomer. Associates with 30S ribosomal subunit, binds 16S rRNA. Zn(2+) serves as cofactor.

The protein resides in the cytoplasm. One of several proteins that assist in the late maturation steps of the functional core of the 30S ribosomal subunit. Helps release RbfA from mature subunits. May play a role in the assembly of ribosomal proteins into the subunit. Circularly permuted GTPase that catalyzes slow GTP hydrolysis, GTPase activity is stimulated by the 30S ribosomal subunit. In Caldanaerobacter subterraneus subsp. tengcongensis (strain DSM 15242 / JCM 11007 / NBRC 100824 / MB4) (Thermoanaerobacter tengcongensis), this protein is Small ribosomal subunit biogenesis GTPase RsgA.